The primary structure comprises 181 residues: Putative ankyrin repeat protein RF_0782 (181 aa).

ANK repeat units follow at residues 24–53 (YHYS…DINF) and 54–83 (GSTP…NTQI).

The polypeptide is Putative ankyrin repeat protein RF_0782 (Rickettsia felis (strain ATCC VR-1525 / URRWXCal2) (Rickettsia azadi)).